The sequence spans 145 residues: Large ribosomal subunit protein uL11m (145 aa).

Belongs to the universal ribosomal protein uL11 family.

The protein resides in the mitochondrion. This is Large ribosomal subunit protein uL11m (RPL11) from Reclinomonas americana.